The primary structure comprises 281 residues: Putative dehydrogenase/reductase SDR family member 4-like 1 (281 aa).

Residue 36–60 (LVTASTDWIGFAVAQRLAQDGAHVV) participates in NADP(+) binding. Ser172 provides a ligand contact to substrate. Residue Tyr185 is the Proton acceptor of the active site. Lys189 lines the NADP(+) pocket. The Peroxisomal targeting signal signature appears at 279–281 (SRL).

Belongs to the short-chain dehydrogenases/reductases (SDR) family.

Functionally, putative oxidoreductase. The protein is Putative dehydrogenase/reductase SDR family member 4-like 1 of Homo sapiens (Human).